A 1263-amino-acid chain; its full sequence is DNA polymerase II large subunit (1263 aa).

Residues 1224–1250 (LENFNSSGNNGKKIEKKEKKAKEKPKK) form a disordered region. Positions 1235-1244 (KKIEKKEKKA) are enriched in basic and acidic residues.

This sequence belongs to the archaeal DNA polymerase II family. Heterodimer of a large subunit and a small subunit.

It catalyses the reaction DNA(n) + a 2'-deoxyribonucleoside 5'-triphosphate = DNA(n+1) + diphosphate. It carries out the reaction Exonucleolytic cleavage in the 3'- to 5'-direction to yield nucleoside 5'-phosphates.. Its function is as follows. Possesses two activities: a DNA synthesis (polymerase) and an exonucleolytic activity that degrades single-stranded DNA in the 3'- to 5'-direction. Has a template-primer preference which is characteristic of a replicative DNA polymerase. The chain is DNA polymerase II large subunit (polC) from Pyrococcus furiosus (strain ATCC 43587 / DSM 3638 / JCM 8422 / Vc1).